An 816-amino-acid chain; its full sequence is Molybdenum cofactor sulfurase (816 aa).

At Lys-273 the chain carries N6-(pyridoxal phosphate)lysine. Cys-427 is a catalytic residue. One can recognise an MOSC domain in the interval 647 to 812; that stretch reads NSDSQSHSCI…IRVGEEIIPN (166 aa).

This sequence belongs to the class-V pyridoxal-phosphate-dependent aminotransferase family. MOCOS subfamily. Pyridoxal 5'-phosphate serves as cofactor. As to expression, ubiquitously expressed.

It catalyses the reaction Mo-molybdopterin + L-cysteine + AH2 = thio-Mo-molybdopterin + L-alanine + A + H2O. The protein operates within cofactor biosynthesis; molybdopterin biosynthesis. In terms of biological role, sulfurates the molybdenum cofactor. Sulfation of molybdenum is essential for xanthine dehydrogenase (XDH) and aldehyde oxidase (ADO) enzymes in which molybdenum cofactor is liganded by 1 oxygen and 1 sulfur atom in active form. This Solanum lycopersicum (Tomato) protein is Molybdenum cofactor sulfurase (FLACCA).